A 147-amino-acid chain; its full sequence is Deoxyuridine 5'-triphosphate nucleotidohydrolase (147 aa).

Substrate contacts are provided by residues 63 to 65, Asn76, and 80 to 82; these read RSG and TID.

This sequence belongs to the dUTPase family. The cofactor is Mg(2+).

The catalysed reaction is dUTP + H2O = dUMP + diphosphate + H(+). It functions in the pathway pyrimidine metabolism; dUMP biosynthesis; dUMP from dCTP (dUTP route): step 2/2. Functionally, this enzyme is involved in nucleotide metabolism: it produces dUMP, the immediate precursor of thymidine nucleotides and it decreases the intracellular concentration of dUTP so that uracil cannot be incorporated into DNA. The chain is Deoxyuridine 5'-triphosphate nucleotidohydrolase from Chlamydia caviae (strain ATCC VR-813 / DSM 19441 / 03DC25 / GPIC) (Chlamydophila caviae).